Consider the following 188-residue polypeptide: GTPase KRas (188 aa).

GTP contacts are provided by residues 10–18, 29–35, 59–60, and 116–119; these read GAGGVGKSA, VDEYDPT, AG, and NKYD. The Effector region signature appears at 32–40; the sequence is YDPTIEDSY. The tract at residues 167–188 is disordered; that stretch reads KEKMSKEGKKKKKKSKTKCILM. Cys185 is modified (cysteine methyl ester). Residue Cys185 is the site of S-farnesyl cysteine attachment. A propeptide spans 186 to 188 (removed in mature form); it reads ILM.

It belongs to the small GTPase superfamily. Ras family.

The protein localises to the cell membrane. It is found in the cytoplasm. It catalyses the reaction GTP + H2O = GDP + phosphate + H(+). Its activity is regulated as follows. Alternates between an inactive form bound to GDP and an active form bound to GTP. Activated by a guanine nucleotide-exchange factor (GEF) and inactivated by a GTPase-activating protein (GAP). Functionally, ras proteins bind GDP/GTP and possess intrinsic GTPase activity. Plays an important role in the regulation of cell proliferation. May play a role in promoting oncogenic events by inducing transcriptional silencing of tumor suppressor genes (TSGs). The polypeptide is GTPase KRas (kras) (Kryptolebias marmoratus (Mangrove killifish)).